The chain runs to 296 residues: Ribosomal protein L11 methyltransferase (296 aa).

Residues Thr-146, Gly-167, Asp-189, and Asn-231 each contribute to the S-adenosyl-L-methionine site.

The protein belongs to the methyltransferase superfamily. PrmA family.

It is found in the cytoplasm. The enzyme catalyses L-lysyl-[protein] + 3 S-adenosyl-L-methionine = N(6),N(6),N(6)-trimethyl-L-lysyl-[protein] + 3 S-adenosyl-L-homocysteine + 3 H(+). Methylates ribosomal protein L11. This Haemophilus influenzae (strain ATCC 51907 / DSM 11121 / KW20 / Rd) protein is Ribosomal protein L11 methyltransferase.